The primary structure comprises 202 residues: Large ribosomal subunit protein bL25 (202 aa).

This sequence belongs to the bacterial ribosomal protein bL25 family. CTC subfamily. As to quaternary structure, part of the 50S ribosomal subunit; part of the 5S rRNA/L5/L18/L25 subcomplex. Contacts the 5S rRNA. Binds to the 5S rRNA independently of L5 and L18.

In terms of biological role, this is one of the proteins that binds to the 5S RNA in the ribosome where it forms part of the central protuberance. The protein is Large ribosomal subunit protein bL25 of Methylococcus capsulatus (strain ATCC 33009 / NCIMB 11132 / Bath).